Here is a 245-residue protein sequence, read N- to C-terminus: Small ribosomal subunit protein uS2 (245 aa).

This sequence belongs to the universal ribosomal protein uS2 family.

In Dehalococcoides mccartyi (strain CBDB1), this protein is Small ribosomal subunit protein uS2.